The sequence spans 113 residues: UPF0482 protein YnfB (113 aa).

The first 28 residues, 1 to 28, serve as a signal peptide directing secretion; that stretch reads MKITLSKRIGLLAFLLPCALALSTTVHA.

The protein belongs to the UPF0482 family.

The polypeptide is UPF0482 protein YnfB (Shigella flexneri serotype 5b (strain 8401)).